Reading from the N-terminus, the 164-residue chain is Peroxynitrite isomerase 2 (164 aa).

Positions G17–G23 match the GXWXGXG motif. Position 155 (H155) interacts with heme b.

Belongs to the nitrobindin family. Homodimer. The cofactor is heme b.

It catalyses the reaction peroxynitrite = nitrate. Its pathway is nitrogen metabolism. Functionally, heme-binding protein able to scavenge peroxynitrite and to protect free L-tyrosine against peroxynitrite-mediated nitration, by acting as a peroxynitrite isomerase that converts peroxynitrite to nitrate. Therefore, this protein likely plays a role in peroxynitrite sensing and in the detoxification of reactive nitrogen and oxygen species (RNS and ROS, respectively). Is able to bind nitric oxide (NO) in vitro, but may act as a sensor of peroxynitrite levels in vivo. The sequence is that of Peroxynitrite isomerase 2 from Mycobacterium bovis (strain BCG / Pasteur 1173P2).